The following is a 306-amino-acid chain: Extensin (306 aa).

The N-terminal stretch at 1-32 (MGRIARGSKMSSLIVSLLVVLVSLNLASETTA) is a signal peptide. The interval 33–306 (KYTYSSPPPP…YTSPPPPHHY (274 aa)) is disordered. Composition is skewed to pro residues over residues 38 to 122 (SPPP…PKHS), 133 to 152 (SPPP…PKHS), 183 to 214 (SPPP…PKHS), and 225 to 290 (SPPP…SPPP).

Hydroxylated on proline residues in the S-P-P-P-P repeat. In terms of processing, O-glycosylated on hydroxyprolines.

The protein localises to the secreted. The protein resides in the primary cell wall. Its function is as follows. Structural component in primary cell wall. The protein is Extensin of Daucus carota (Wild carrot).